Consider the following 89-residue polypeptide: Small ribosomal subunit protein bS20 (89 aa).

The protein belongs to the bacterial ribosomal protein bS20 family.

Binds directly to 16S ribosomal RNA. The polypeptide is Small ribosomal subunit protein bS20 (Xanthobacter autotrophicus (strain ATCC BAA-1158 / Py2)).